Consider the following 158-residue polypeptide: 6,7-dimethyl-8-ribityllumazine synthase (158 aa).

5-amino-6-(D-ribitylamino)uracil contacts are provided by residues Phe24, 58 to 60, and 82 to 84; these read AFE and AVI. Residue 87-88 participates in (2S)-2-hydroxy-3-oxobutyl phosphate binding; sequence GT. Catalysis depends on His90, which acts as the Proton donor. Position 115 (Phe115) interacts with 5-amino-6-(D-ribitylamino)uracil. Arg129 contributes to the (2S)-2-hydroxy-3-oxobutyl phosphate binding site.

Belongs to the DMRL synthase family. In terms of assembly, forms an icosahedral capsid composed of 60 subunits, arranged as a dodecamer of pentamers.

It catalyses the reaction (2S)-2-hydroxy-3-oxobutyl phosphate + 5-amino-6-(D-ribitylamino)uracil = 6,7-dimethyl-8-(1-D-ribityl)lumazine + phosphate + 2 H2O + H(+). It functions in the pathway cofactor biosynthesis; riboflavin biosynthesis; riboflavin from 2-hydroxy-3-oxobutyl phosphate and 5-amino-6-(D-ribitylamino)uracil: step 1/2. Functionally, catalyzes the formation of 6,7-dimethyl-8-ribityllumazine by condensation of 5-amino-6-(D-ribitylamino)uracil with 3,4-dihydroxy-2-butanone 4-phosphate. This is the penultimate step in the biosynthesis of riboflavin. This chain is 6,7-dimethyl-8-ribityllumazine synthase, found in Pseudomonas paraeruginosa (strain DSM 24068 / PA7) (Pseudomonas aeruginosa (strain PA7)).